A 333-amino-acid chain; its full sequence is Phosphate acyltransferase (333 aa).

The protein belongs to the PlsX family. Homodimer. Probably interacts with PlsY.

It is found in the cytoplasm. It carries out the reaction a fatty acyl-[ACP] + phosphate = an acyl phosphate + holo-[ACP]. It functions in the pathway lipid metabolism; phospholipid metabolism. In terms of biological role, catalyzes the reversible formation of acyl-phosphate (acyl-PO(4)) from acyl-[acyl-carrier-protein] (acyl-ACP). This enzyme utilizes acyl-ACP as fatty acyl donor, but not acyl-CoA. This is Phosphate acyltransferase from Cellvibrio japonicus (strain Ueda107) (Pseudomonas fluorescens subsp. cellulosa).